Reading from the N-terminus, the 410-residue chain is S-adenosylmethionine synthase (410 aa).

His15 serves as a coordination point for ATP. Residue Asp17 coordinates Mg(2+). Residue Glu43 participates in K(+) binding. Residues Glu56 and Gln100 each coordinate L-methionine. The tract at residues Gln100 to Thr110 is flexible loop. ATP is bound by residues Asp171–Lys173, Lys248–Phe249, Asp257, Arg263–Lys264, Ala280, and Lys284. Asp257 serves as a coordination point for L-methionine. Lys288 serves as a coordination point for L-methionine.

This sequence belongs to the AdoMet synthase family. As to quaternary structure, homotetramer; dimer of dimers. Mg(2+) is required as a cofactor. It depends on K(+) as a cofactor.

The protein localises to the cytoplasm. It catalyses the reaction L-methionine + ATP + H2O = S-adenosyl-L-methionine + phosphate + diphosphate. It functions in the pathway amino-acid biosynthesis; S-adenosyl-L-methionine biosynthesis; S-adenosyl-L-methionine from L-methionine: step 1/1. Functionally, catalyzes the formation of S-adenosylmethionine (AdoMet) from methionine and ATP. The overall synthetic reaction is composed of two sequential steps, AdoMet formation and the subsequent tripolyphosphate hydrolysis which occurs prior to release of AdoMet from the enzyme. This Prochlorococcus marinus (strain MIT 9211) protein is S-adenosylmethionine synthase.